We begin with the raw amino-acid sequence, 142 residues long: Putative transmembrane protein INAFM1 (142 aa).

Residues 1–19 are compositionally biased toward gly residues; that stretch reads MRGTSCVGGGAESPGGAGL. A disordered region spans residues 1-22; the sequence is MRGTSCVGGGAESPGGAGLSEG. The chain crosses the membrane as a helical span at residues 36 to 56; that stretch reads YFLCVSLAAVLLAVYYGLIWV. Disordered stretches follow at residues 61–83 and 99–142; these read PAAPAGPQPSAPSPPCAARPGVP and VPGG…RRPG. Pro residues predominate over residues 64–83; the sequence is PAGPQPSAPSPPCAARPGVP. Low complexity predominate over residues 99–111; it reads VPGGPRPQLQLPL. Residues 117–142 show a composition bias toward basic and acidic residues; sequence YSDPDRRPSRQTPRETPEAAEGRRPG.

Its subcellular location is the membrane. This chain is Putative transmembrane protein INAFM1, found in Homo sapiens (Human).